Reading from the N-terminus, the 103-residue chain is RNA-binding protein Hfq (103 aa).

A Sm domain is found at 9 to 68 (DPFLNALRRERVPVSIYLVNGIKLQGQIESFDQFVILLKNTVSQMVYKHAISTVVPSRPV). Residues 63 to 103 (VPSRPVSHHSNNAGGGTGSNFHHGSNAQGSSAPAQDSDETE) form a disordered region. Residues 81–96 (SNFHHGSNAQGSSAPA) show a composition bias toward polar residues.

The protein belongs to the Hfq family. In terms of assembly, homohexamer.

In terms of biological role, RNA chaperone that binds small regulatory RNA (sRNAs) and mRNAs to facilitate mRNA translational regulation in response to envelope stress, environmental stress and changes in metabolite concentrations. Also binds with high specificity to tRNAs. This Enterobacter sp. (strain 638) protein is RNA-binding protein Hfq.